A 601-amino-acid chain; its full sequence is Glutathione-regulated potassium-efflux system protein KefB (601 aa).

The next 13 membrane-spanning stretches (helical) occupy residues 4 to 24 (ADLL…VPLA), 29 to 49 (IGAV…GLGF), 55 to 75 (EILH…GLEL), 87 to 107 (IFGV…GLLM), 111 to 131 (FLWQ…TAMA), 152 to 172 (VLLF…LLAG), 177 to 197 (HFDW…LIGG), 207 to 227 (FIAA…LVLS), 230 to 250 (LFMD…GVLL), 262 to 282 (AIDP…GMSL), 284 to 304 (LGVL…LVVI), 324 to 344 (MQFA…FSTA), and 356 to 376 (ALLL…MKGI). Positions 400–519 (KPQVVVVGFG…AGVTQFSRET (120 aa)) constitute an RCK N-terminal domain.

It belongs to the monovalent cation:proton antiporter 2 (CPA2) transporter (TC 2.A.37) family. KefB subfamily. In terms of assembly, interacts with the regulatory subunit KefG.

The protein resides in the cell inner membrane. Pore-forming subunit of a potassium efflux system that confers protection against electrophiles. Catalyzes K(+)/H(+) antiport. The polypeptide is Glutathione-regulated potassium-efflux system protein KefB (Salmonella typhi).